Reading from the N-terminus, the 418-residue chain is Putative ion-transport protein YfeO (418 aa).

A run of 12 helical transmembrane segments spans residues 10–30, 54–74, 99–119, 120–140, 149–169, 186–206, 223–243, 258–278, 300–320, 322–342, 343–363, and 371–391; these read LLLSLPAVAIGITSSLILIMV, DSPLWIIGVLTLTGIAVGLVI, ALPGLIVALILGLAGGVSLGP, EHPIITVNIALAVAIGARLLP, ILASAGTIGALFGTTVAAALI, LFAPLMAAAAGALTTGLFFHP, ILSGAIVAAIAIAAGMVAVWC, VFVLGIGGFILGILGVIGGPV, DYFLLAVIKLAALVVAAASGF, GGRIFPAVFVGVALGLMLHEH, VPAVPAAITVSCAILGIVLVV, and LFMAAVVVPNTTLLPLLCIVM.

Belongs to the chloride channel (TC 2.A.49) family.

It is found in the cell membrane. This chain is Putative ion-transport protein YfeO, found in Escherichia coli O127:H6 (strain E2348/69 / EPEC).